We begin with the raw amino-acid sequence, 343 residues long: Sulfate/thiosulfate import ATP-binding protein CysA (343 aa).

Residues 3–237 (IRISHLRKQF…PASPFVYSFV (235 aa)) form the ABC transporter domain. An ATP-binding site is contributed by 35–42 (GPSGSGKT).

This sequence belongs to the ABC transporter superfamily. Sulfate/tungstate importer (TC 3.A.1.6) family. In terms of assembly, the complex is composed of two ATP-binding proteins (CysA), two transmembrane proteins (CysT and CysW) and a solute-binding protein (CysP).

The protein resides in the cell inner membrane. The catalysed reaction is sulfate(out) + ATP + H2O = sulfate(in) + ADP + phosphate + H(+). The enzyme catalyses thiosulfate(out) + ATP + H2O = thiosulfate(in) + ADP + phosphate + H(+). In terms of biological role, part of the ABC transporter complex CysAWTP involved in sulfate/thiosulfate import. Responsible for energy coupling to the transport system. In Xanthomonas campestris pv. campestris (strain ATCC 33913 / DSM 3586 / NCPPB 528 / LMG 568 / P 25), this protein is Sulfate/thiosulfate import ATP-binding protein CysA.